The primary structure comprises 286 residues: Putative electron transfer flavoprotein subunit YgcQ (286 aa).

225–253 is an FAD binding site; sequence VCIVVGASGAAALMAGVRNSKFVVAINHD.

It belongs to the ETF alpha-subunit/FixB family. YgcQ and YgcR form a heterodimer.

Functionally, may play a role in a redox process. This Escherichia coli (strain K12) protein is Putative electron transfer flavoprotein subunit YgcQ (ygcQ).